A 429-amino-acid chain; its full sequence is Integral membrane protein GPR137C (429 aa).

The span at Met1–Gly17 shows a compositional bias: low complexity. The disordered stretch occupies residues Met1 to Gly29. At Met1 to Ala48 the chain is on the lumenal side. The helical transmembrane segment at Leu49–Trp69 threads the bilayer. Residues Arg70–Ser83 lie on the Cytoplasmic side of the membrane. The chain crosses the membrane as a helical span at residues Leu84–Phe104. Topologically, residues Ser105–His120 are lumenal. A helical membrane pass occupies residues Phe121–Leu141. Residues Leu142–His167 are Cytoplasmic-facing. A helical transmembrane segment spans residues Leu168–Val188. Over His189–Ala205 the chain is Lumenal. The chain crosses the membrane as a helical span at residues Leu206–Ile226. The Cytoplasmic portion of the chain corresponds to Thr227–Thr246. The chain crosses the membrane as a helical span at residues Val247 to Val267. At Val268–Tyr300 the chain is on the lumenal side. N-linked (GlcNAc...) asparagine glycosylation occurs at Asn285. A helical membrane pass occupies residues Ile301–Phe321. The Cytoplasmic portion of the chain corresponds to Phe322–Asn429.

This sequence belongs to the GPR137 family.

The protein resides in the lysosome membrane. Lysosomal integral membrane protein that may regulate MTORC1 complex translocation to lysosomes. The sequence is that of Integral membrane protein GPR137C (GPR137C) from Homo sapiens (Human).